Consider the following 547-residue polypeptide: MTAKDILFDADARAKLKVGVDKLANTVKVTLGPAGRNVLIDKKFGAPTSTKDGVTVAKEIELDDAIENMGAQMVREVASKTSDVAGDGTTTATVLAQAIYREGLKNVAAGARPIDLKRGIDRAVKEVVAELRNISRSISGKKEIAQVGTISANNDPEIGELIAEAMDKVGKDGVITVEEAKGMETELKVVEGMQFDRGYLSPYFVTNSETMEAELEDALILIHDKKIGNMKELLPILEKSAQSGRPLLIIAEDIEGEALATLVVNRLRGTLKVCAVKAPGFGDRRKAMLEDIAILTGGTVISEEKGYKLENATVNYLGQAARITVDKDNTTIVEGKGTQDEIKARINEIKGQIDKSTSDYDTEKLQERLAKLSGGVAVLNIGASTEVEMKEKKARVEDALHATRAAVQEGIVVGGGVALIRAIKGLSNAIADNEDQKTGIDIIRRALEEPLRQIVANTGTTDGAVVLERVKQGEGDFGFNARTEQYEDLVAAGVVDPTKVTRSALENAASVASILLTTEACITDIKEDKSDMPAMPPGGMGGMGGMY.

ATP-binding positions include 30-33 (TLGP), K51, 87-91 (DGTTT), G415, and D496. The segment at 528–547 (DKSDMPAMPPGGMGGMGGMY) is disordered. The span at 538–547 (GGMGGMGGMY) shows a compositional bias: gly residues.

It belongs to the chaperonin (HSP60) family. Forms a cylinder of 14 subunits composed of two heptameric rings stacked back-to-back. Interacts with the co-chaperonin GroES.

The protein resides in the cytoplasm. The catalysed reaction is ATP + H2O + a folded polypeptide = ADP + phosphate + an unfolded polypeptide.. Together with its co-chaperonin GroES, plays an essential role in assisting protein folding. The GroEL-GroES system forms a nano-cage that allows encapsulation of the non-native substrate proteins and provides a physical environment optimized to promote and accelerate protein folding. The protein is Chaperonin GroEL of Chlorobium luteolum (strain DSM 273 / BCRC 81028 / 2530) (Pelodictyon luteolum).